A 375-amino-acid chain; its full sequence is Queuine tRNA-ribosyltransferase (375 aa).

Aspartate 90 acts as the Proton acceptor in catalysis. Substrate contacts are provided by residues 90-94 (DSGGF), aspartate 144, glutamine 190, and glycine 217. Residues 248–254 (GIGTPHY) are RNA binding. Residue aspartate 267 is the Nucleophile of the active site. The tract at residues 272 to 276 (ARITR) is RNA binding; important for wobble base 34 recognition. Zn(2+) contacts are provided by cysteine 305, cysteine 307, cysteine 310, and histidine 336.

The protein belongs to the queuine tRNA-ribosyltransferase family. In terms of assembly, homodimer. Within each dimer, one monomer is responsible for RNA recognition and catalysis, while the other monomer binds to the replacement base PreQ1. It depends on Zn(2+) as a cofactor.

The enzyme catalyses 7-aminomethyl-7-carbaguanine + guanosine(34) in tRNA = 7-aminomethyl-7-carbaguanosine(34) in tRNA + guanine. Its pathway is tRNA modification; tRNA-queuosine biosynthesis. Functionally, catalyzes the base-exchange of a guanine (G) residue with the queuine precursor 7-aminomethyl-7-deazaguanine (PreQ1) at position 34 (anticodon wobble position) in tRNAs with GU(N) anticodons (tRNA-Asp, -Asn, -His and -Tyr). Catalysis occurs through a double-displacement mechanism. The nucleophile active site attacks the C1' of nucleotide 34 to detach the guanine base from the RNA, forming a covalent enzyme-RNA intermediate. The proton acceptor active site deprotonates the incoming PreQ1, allowing a nucleophilic attack on the C1' of the ribose to form the product. After dissociation, two additional enzymatic reactions on the tRNA convert PreQ1 to queuine (Q), resulting in the hypermodified nucleoside queuosine (7-(((4,5-cis-dihydroxy-2-cyclopenten-1-yl)amino)methyl)-7-deazaguanosine). The sequence is that of Queuine tRNA-ribosyltransferase from Borreliella burgdorferi (strain ZS7) (Borrelia burgdorferi).